The chain runs to 273 residues: MNLTPEHAQKSSPMSWTVGGKTLNSRLLIGSALYPSPQAMQGAIEASGAEIVTVSLRRQSAGDQAGKTFWNMIKSLNCHVLPNTAGCHSAKEAITTAQMAREVFETNWIKLEVIGDQYNLQPDPFELLKATETLVNDGFEVFPYTTDDLVLAQRLVEAGCNILMPWGSPIGSGKGLMNPYNLNAIRQRFPELTLIVDAGIGKPSHAVQALEMGYNGILLNSAVALSPNPITMGKAFKSAVEAGVYAFDAGTMQERDLASPSTPVVGTPFWHQH.

The active-site Schiff-base intermediate with DXP is K110. 1-deoxy-D-xylulose 5-phosphate contacts are provided by residues G171, 198–199, and 220–221; these read AG and NS.

It belongs to the ThiG family. In terms of assembly, homotetramer. Forms heterodimers with either ThiH or ThiS.

Its subcellular location is the cytoplasm. The enzyme catalyses [ThiS sulfur-carrier protein]-C-terminal-Gly-aminoethanethioate + 2-iminoacetate + 1-deoxy-D-xylulose 5-phosphate = [ThiS sulfur-carrier protein]-C-terminal Gly-Gly + 2-[(2R,5Z)-2-carboxy-4-methylthiazol-5(2H)-ylidene]ethyl phosphate + 2 H2O + H(+). The protein operates within cofactor biosynthesis; thiamine diphosphate biosynthesis. In terms of biological role, catalyzes the rearrangement of 1-deoxy-D-xylulose 5-phosphate (DXP) to produce the thiazole phosphate moiety of thiamine. Sulfur is provided by the thiocarboxylate moiety of the carrier protein ThiS. In vitro, sulfur can be provided by H(2)S. This chain is Thiazole synthase, found in Hydrogenovibrio crunogenus (strain DSM 25203 / XCL-2) (Thiomicrospira crunogena).